We begin with the raw amino-acid sequence, 642 residues long: Threonine--tRNA ligase (642 aa).

The region spanning 1–61 is the TGS domain; the sequence is MPVITLPDGS…ENDTQLSIIT (61 aa). The segment at 243–534 is catalytic; the sequence is DHRKIGKQLD…LTEEFAGFFP (292 aa). Lys286 bears the N6-acetyllysine mark. Positions 334, 385, and 511 each coordinate Zn(2+).

This sequence belongs to the class-II aminoacyl-tRNA synthetase family. As to quaternary structure, homodimer. Zn(2+) serves as cofactor.

Its subcellular location is the cytoplasm. The enzyme catalyses tRNA(Thr) + L-threonine + ATP = L-threonyl-tRNA(Thr) + AMP + diphosphate + H(+). Its function is as follows. Catalyzes the attachment of threonine to tRNA(Thr) in a two-step reaction: L-threonine is first activated by ATP to form Thr-AMP and then transferred to the acceptor end of tRNA(Thr). Also edits incorrectly charged L-seryl-tRNA(Thr). This Shigella dysenteriae serotype 1 (strain Sd197) protein is Threonine--tRNA ligase.